An 822-amino-acid chain; its full sequence is Ribonucleoside-diphosphate reductase large subunit (822 aa).

Residues T249, 264–265, G295, 470–474, and 651–655 contribute to the substrate site; these read SC, NLCTE, and PTAAS. Cysteines 265 and 487 form a disulfide. N470 acts as the Proton acceptor in catalysis. The active-site Cysteine radical intermediate is C472. The Proton acceptor role is filled by E474.

This sequence belongs to the ribonucleoside diphosphate reductase large chain family. As to quaternary structure, heterotetramer composed of a homodimer of the large subunit (R1) and a homodimer of the small subunit (R2). Larger multisubunit protein complex are also active, composed of (R1)n(R2)n.

The catalysed reaction is a 2'-deoxyribonucleoside 5'-diphosphate + [thioredoxin]-disulfide + H2O = a ribonucleoside 5'-diphosphate + [thioredoxin]-dithiol. Its function is as follows. Ribonucleoside-diphosphate reductase holoenzyme provides the precursors necessary for viral DNA synthesis. Allows virus growth in non-dividing cells, as well as reactivation from latency in infected hosts. Catalyzes the biosynthesis of deoxyribonucleotides from the corresponding ribonucleotides. This chain is Ribonucleoside-diphosphate reductase large subunit, found in Gallus gallus (Chicken).